The sequence spans 156 residues: Ribosomal RNA large subunit methyltransferase H (156 aa).

S-adenosyl-L-methionine is bound by residues L73, G104, and L123–L128.

The protein belongs to the RNA methyltransferase RlmH family. As to quaternary structure, homodimer.

It is found in the cytoplasm. It carries out the reaction pseudouridine(1915) in 23S rRNA + S-adenosyl-L-methionine = N(3)-methylpseudouridine(1915) in 23S rRNA + S-adenosyl-L-homocysteine + H(+). Functionally, specifically methylates the pseudouridine at position 1915 (m3Psi1915) in 23S rRNA. This is Ribosomal RNA large subunit methyltransferase H from Erwinia tasmaniensis (strain DSM 17950 / CFBP 7177 / CIP 109463 / NCPPB 4357 / Et1/99).